A 256-amino-acid polypeptide reads, in one-letter code: Large ribosomal subunit protein eL8A (256 aa).

The interval 1–37 (MAPGKKVAPAPFGAKSTKSNKTRNPLTHSTPKNFGIG) is disordered. Polar residues predominate over residues 16–32 (STKSNKTRNPLTHSTPK).

It belongs to the eukaryotic ribosomal protein eL8 family. In terms of assembly, component of the large ribosomal subunit (LSU). Mature yeast ribosomes consist of a small (40S) and a large (60S) subunit. The 40S small subunit contains 1 molecule of ribosomal RNA (18S rRNA) and 33 different proteins (encoded by 57 genes). The large 60S subunit contains 3 rRNA molecules (25S, 5.8S and 5S rRNA) and 46 different proteins (encoded by 81 genes).

It localises to the cytoplasm. In terms of biological role, component of the ribosome, a large ribonucleoprotein complex responsible for the synthesis of proteins in the cell. The small ribosomal subunit (SSU) binds messenger RNAs (mRNAs) and translates the encoded message by selecting cognate aminoacyl-transfer RNA (tRNA) molecules. The large subunit (LSU) contains the ribosomal catalytic site termed the peptidyl transferase center (PTC), which catalyzes the formation of peptide bonds, thereby polymerizing the amino acids delivered by tRNAs into a polypeptide chain. The nascent polypeptides leave the ribosome through a tunnel in the LSU and interact with protein factors that function in enzymatic processing, targeting, and the membrane insertion of nascent chains at the exit of the ribosomal tunnel. The sequence is that of Large ribosomal subunit protein eL8A from Saccharomyces cerevisiae (strain ATCC 204508 / S288c) (Baker's yeast).